The primary structure comprises 137 residues: MSENEDLQKSFLDTVKYDEKGLVPAIVQDHETGKVLMMAWMNHESLLMTLEKKKACYWSRSRQKLWLKGESSGNMQDVHDILIDCDGDTILLKVSQKGGACHVGYHSCFYRKVKETLDMEICDTLMFNPDDVYGKKS.

Residue Asp-84 participates in Mg(2+) binding. A Zn(2+)-binding site is contributed by Cys-85. Residues Asp-86 and Asp-88 each contribute to the Mg(2+) site. Positions 101 and 108 each coordinate Zn(2+).

The protein belongs to the PRA-CH family. Homodimer. It depends on Mg(2+) as a cofactor. Requires Zn(2+) as cofactor.

The protein localises to the cytoplasm. It catalyses the reaction 1-(5-phospho-beta-D-ribosyl)-5'-AMP + H2O = 1-(5-phospho-beta-D-ribosyl)-5-[(5-phospho-beta-D-ribosylamino)methylideneamino]imidazole-4-carboxamide. Its pathway is amino-acid biosynthesis; L-histidine biosynthesis; L-histidine from 5-phospho-alpha-D-ribose 1-diphosphate: step 3/9. Its function is as follows. Catalyzes the hydrolysis of the adenine ring of phosphoribosyl-AMP. The sequence is that of Phosphoribosyl-AMP cyclohydrolase from Chlorobium phaeobacteroides (strain DSM 266 / SMG 266 / 2430).